The sequence spans 694 residues: Elongation factor G (694 aa).

One can recognise a tr-type G domain in the interval 6–288 (KLYRNIGIAA…GVIEYLPSPT (283 aa)). Residues 15-22 (AHVDAGKT), 86-90 (DTPGH), and 140-143 (NKMD) each bind GTP.

This sequence belongs to the TRAFAC class translation factor GTPase superfamily. Classic translation factor GTPase family. EF-G/EF-2 subfamily.

Its subcellular location is the cytoplasm. Its function is as follows. Catalyzes the GTP-dependent ribosomal translocation step during translation elongation. During this step, the ribosome changes from the pre-translocational (PRE) to the post-translocational (POST) state as the newly formed A-site-bound peptidyl-tRNA and P-site-bound deacylated tRNA move to the P and E sites, respectively. Catalyzes the coordinated movement of the two tRNA molecules, the mRNA and conformational changes in the ribosome. This chain is Elongation factor G, found in Legionella pneumophila (strain Corby).